Consider the following 179-residue polypeptide: Probable chorismate pyruvate-lyase (179 aa).

Residues Arg82, Leu120, and Glu165 each coordinate substrate.

Belongs to the UbiC family.

It is found in the cytoplasm. It catalyses the reaction chorismate = 4-hydroxybenzoate + pyruvate. The protein operates within cofactor biosynthesis; ubiquinone biosynthesis. Removes the pyruvyl group from chorismate, with concomitant aromatization of the ring, to provide 4-hydroxybenzoate (4HB) for the ubiquinone pathway. This chain is Probable chorismate pyruvate-lyase, found in Vibrio parahaemolyticus serotype O3:K6 (strain RIMD 2210633).